The following is a 433-amino-acid chain: Protein MTH1 (433 aa).

The segment at 1-117 (MFVSPPPATS…SRRSSVAESG (117 aa)) is disordered. The segment covering 9–47 (TSKNQVLQRRPLESTNSNHGFASSLQAIPENTMSGSDNA) has biased composition (polar residues). Positions 48–64 (SFQSLPLSMSSSQSTTS) are enriched in low complexity. Basic and acidic residues predominate over residues 77 to 87 (YTDRARDEIKK).

This sequence to yeast STD1/MSN3.

In Saccharomyces cerevisiae (strain ATCC 204508 / S288c) (Baker's yeast), this protein is Protein MTH1 (MTH1).